The following is a 580-amino-acid chain: NADH-quinone oxidoreductase subunit C/D (580 aa).

Residues 1-171 are NADH dehydrogenase I subunit C; that stretch reads MSLDQAIPEA…PPFVLTDRLF (171 aa). Residues 195–580 form an NADH dehydrogenase I subunit D region; it reads ELMVLNFGPH…IDFVMSDVDR (386 aa).

This sequence in the N-terminal section; belongs to the complex I 30 kDa subunit family. The protein in the C-terminal section; belongs to the complex I 49 kDa subunit family. NDH-1 is composed of 13 different subunits. Subunits NuoB, CD, E, F, and G constitute the peripheral sector of the complex.

Its subcellular location is the cell inner membrane. The catalysed reaction is a quinone + NADH + 5 H(+)(in) = a quinol + NAD(+) + 4 H(+)(out). Its function is as follows. NDH-1 shuttles electrons from NADH, via FMN and iron-sulfur (Fe-S) centers, to quinones in the respiratory chain. The immediate electron acceptor for the enzyme in this species is believed to be ubiquinone. Couples the redox reaction to proton translocation (for every two electrons transferred, four hydrogen ions are translocated across the cytoplasmic membrane), and thus conserves the redox energy in a proton gradient. The polypeptide is NADH-quinone oxidoreductase subunit C/D (Cereibacter sphaeroides (strain ATCC 17029 / ATH 2.4.9) (Rhodobacter sphaeroides)).